A 256-amino-acid chain; its full sequence is 5'-nucleotidase YutF (256 aa).

Belongs to the HAD-like hydrolase superfamily. NagD family. Homodimer. Mg(2+) is required as a cofactor.

Its subcellular location is the cytoplasm. The catalysed reaction is a ribonucleoside 5'-phosphate + H2O = a ribonucleoside + phosphate. It carries out the reaction XMP + H2O = xanthosine + phosphate. Its function is as follows. Catalyzes the hydrolysis of various purine and pyrimidine 5'-nucleotides, showing preference for 5'-nucleoside monophosphates and exhibiting the highest catalytic activity toward 5'-XMP. Also shows a relatively high phosphohydrolase activity toward the nucleotide precursors ribose-5-phosphate (R5P) and 5-phosphoribosyl-1-pyrophosphate (PRPP), and toward the non-natural substrate p-nitrophenyl phosphate (pNPP). This Bacillus subtilis (strain 168) protein is 5'-nucleotidase YutF (yutF).